The chain runs to 127 residues: Ribonuclease P protein component 1 (127 aa).

It belongs to the eukaryotic/archaeal RNase P protein component 1 family. Consists of a catalytic RNA component and at least 4-5 protein subunits.

The protein resides in the cytoplasm. The enzyme catalyses Endonucleolytic cleavage of RNA, removing 5'-extranucleotides from tRNA precursor.. In terms of biological role, part of ribonuclease P, a protein complex that generates mature tRNA molecules by cleaving their 5'-ends. This chain is Ribonuclease P protein component 1, found in Pyrococcus abyssi (strain GE5 / Orsay).